Consider the following 418-residue polypeptide: Histidinol dehydrogenase (418 aa).

NAD(+) is bound by residues Y119, Q180, and N203. Substrate-binding residues include T226, Q248, and H251. The Zn(2+) site is built by Q248 and H251. Catalysis depends on proton acceptor residues E316 and H317. Residues H317, D350, E404, and H409 each coordinate substrate. D350 is a binding site for Zn(2+). H409 serves as a coordination point for Zn(2+).

Belongs to the histidinol dehydrogenase family. Zn(2+) is required as a cofactor.

The enzyme catalyses L-histidinol + 2 NAD(+) + H2O = L-histidine + 2 NADH + 3 H(+). Its pathway is amino-acid biosynthesis; L-histidine biosynthesis; L-histidine from 5-phospho-alpha-D-ribose 1-diphosphate: step 9/9. Functionally, catalyzes the sequential NAD-dependent oxidations of L-histidinol to L-histidinaldehyde and then to L-histidine. The polypeptide is Histidinol dehydrogenase (Staphylococcus aureus (strain COL)).